Consider the following 478-residue polypeptide: Zinc finger protein 410 (478 aa).

The segment at 187-213 is disordered; sequence NAKTSSNGENVHLGSGDGQSKDSGPLP. 5 C2H2-type zinc fingers span residues 219-243, 249-273, 279-303, 309-333, and 339-362; these read LKCT…LKTH, FICP…MRTH, FMCH…RRIH, FLCE…LVVH, and HQCQ…RKHH. Zn(2+) is bound by residues C221, C226, H239, H243, C251, C256, H269, H273, C281, C286, H299, H303, C311, C316, H329, H333, C341, C344, H357, and H361.

In terms of assembly, interacts with CDKN2A/p14ARF. Post-translationally, sumoylated. Sumoylation increases its half-life, possibly by blocking ubiquitin-mediated degradation. In terms of processing, O-glycosylated. O-GlcNAcylation may occur in response to increasing glucose levels and affect transcription factor activity. Widely expressed.

The protein localises to the nucleus. It localises to the chromosome. Its function is as follows. Transcription factor that binds to the sequence motif 5'-CATCCCATAATA-3', and is specifically required to silence expression of fetal hemoglobin in adult erythroid cells. Prevents expression of fetal hemoglobin genes HBG1 and HBG2 through CHD4: acts as a direct transcriptional activator of CHD4, a central component of the NuRD complex that represses transcription of fetal hemoglobin genes HBG1 and HBG2 in erythroid cells. May also activate transcription of matrix-remodeling genes such as MMP1 during fibroblast senescence. May activate transcription of the gap junction gene GJC1, perhaps in response to increasing glucose. However, recent studies suggest that ZNF410 is dedicated to regulate expression of a single gene: CHD4. This chain is Zinc finger protein 410, found in Homo sapiens (Human).